A 932-amino-acid chain; its full sequence is AP-3 complex subunit delta (932 aa).

Thr-2 is modified (N-acetylthreonine). HEAT repeat units follow at residues 157–194 (SLAR…QYPE), 196–231 (LRDN…KNPQ), 233–269 (FIQL…VEPK), 270–307 (LRAK…LEED), 310–346 (ETAM…KINT), 347–384 (DFIS…EDNL), 386–425 (AIVQ…ENYK), 427–466 (KMVN…DISD), 490–527 (VTIA…TLVE), 528–564 (NGND…NWCN), 570–601 (KRFE…ERSV), and 602–638 (EVLE…AYEL). Residues Ser-700 and Ser-727 each carry the phosphoserine modification. Residues 720-868 (EREKERMSNP…EEGNLRKEDE (149 aa)) form a disordered region. 2 stretches are compositionally biased toward basic and acidic residues: residues 738-747 (ERTKNSKDLL) and 755-766 (SDKKPETIRLNR). Thr-767 bears the Phosphothreonine mark. The segment covering 767-779 (TDNSLNSLSLSTT) has biased composition (low complexity). Residues Ser-770 and Ser-773 each carry the phosphoserine modification. Positions 783-793 (RKKKKGKKKNR) are enriched in basic residues. Position 798 is a phosphoserine (Ser-798). Over residues 806–832 (APKRKDAFQKPHDNHSTQNPLKKDKIN) the composition is skewed to basic and acidic residues. A compositionally biased stretch (polar residues) spans 838 to 855 (QLENFDFSNFGQSSNAGR). Residues 857–868 (SQEEGNLRKEDE) are compositionally biased toward basic and acidic residues. A coiled-coil region spans residues 858 to 878 (QEEGNLRKEDELELSRLEANL). At Ser-888 the chain carries Phosphoserine. The span at 897–915 (KKKKKGKKSKSKNKLKTKA) shows a compositional bias: basic residues. The interval 897 to 932 (KKKKKGKKSKSKNKLKTKAKNSPEPNEFLRDQSTDI) is disordered. Position 918 is a phosphoserine (Ser-918). Over residues 923 to 932 (EFLRDQSTDI) the composition is skewed to basic and acidic residues.

Belongs to the adaptor complexes large subunit family. As to quaternary structure, adaptor protein complex 3 (AP-3) is a heterotetramer composed of 2 large adaptins (APL5 and APL6), a medium adaptin (APM3) and a small adaptin (APS3). Interacts with VPS41.

It is found in the golgi apparatus. The protein resides in the cytoplasmic vesicle. Its subcellular location is the clathrin-coated vesicle membrane. Part of the AP-3 complex, an adaptor-related complex which is not clathrin-associated. The complex is associated with the Golgi region as well as more peripheral structures. It facilitates the budding of vesicles from the Golgi membrane and may be directly involved in trafficking to the vacuole. Required for the transport via the ALP pathway, which directs the transport of the cargo proteins PHO8 and VAM3 to the vacuole. The protein is AP-3 complex subunit delta (APL5) of Saccharomyces cerevisiae (strain ATCC 204508 / S288c) (Baker's yeast).